The sequence spans 443 residues: Xaa-Pro dipeptidase (443 aa).

5 residues coordinate Mn(2+): Asp-244, Asp-255, His-336, Glu-381, and Glu-420.

This sequence belongs to the peptidase M24B family. Bacterial-type prolidase subfamily. Requires Mn(2+) as cofactor.

It catalyses the reaction Xaa-L-Pro dipeptide + H2O = an L-alpha-amino acid + L-proline. In terms of biological role, splits dipeptides with a prolyl residue in the C-terminal position. The chain is Xaa-Pro dipeptidase from Stenotrophomonas maltophilia (strain K279a).